The sequence spans 456 residues: CBL-interacting protein kinase 9 (456 aa).

The Protein kinase domain occupies 27–282 (YELGKTIGEG…IAQILEDDWF (256 aa)). Residues 33 to 41 (IGEGSFAKV) and lysine 56 each bind ATP. Aspartate 150 acts as the Proton acceptor in catalysis. The interval 168–197 (DFGLSAFAPQTKEDGLLHTACGTPNYVAPE) is activation loop. Residues 318–343 (REKPESMNAFALISRSQGFNLGNLFE) form the NAF domain. The PPI stretch occupies residues 351–380 (KRETSFTSQCTPQEIMSKIEEACGPLGFNV).

This sequence belongs to the protein kinase superfamily. CAMK Ser/Thr protein kinase family. SNF1 subfamily. Mn(2+) is required as a cofactor.

The enzyme catalyses L-seryl-[protein] + ATP = O-phospho-L-seryl-[protein] + ADP + H(+). It carries out the reaction L-threonyl-[protein] + ATP = O-phospho-L-threonyl-[protein] + ADP + H(+). Its function is as follows. CIPK serine-threonine protein kinases interact with CBL proteins. Binding of a CBL protein to the regulatory NAF domain of CIPK protein lead to the activation of the kinase in a calcium-dependent manner. In Oryza sativa subsp. japonica (Rice), this protein is CBL-interacting protein kinase 9 (CIPK9).